The sequence spans 1217 residues: Myosin-5 (1217 aa).

Residues 1–11 (MAILKRGARNK) show a composition bias toward basic residues. The interval 1–24 (MAILKRGARNKTHQEPAKRGGNNI) is disordered. Residues 37–716 (VGVSDLTLLT…TLFALENMRD (680 aa)) enclose the Myosin motor domain. Residue 130-137 (GESGAGKT) participates in ATP binding. Ser-358 carries the phosphoserine modification. An actin-binding region spans residues 405–487 (SIGILDIYGF…PGIFAAMNDS (83 aa)). 2 consecutive IQ domains span residues 720 to 740 (HNMA…RIDA) and 741 to 766 (AVKI…YGTS). The TH1 domain maps to 772 to 962 (KERRSMSLLG…TIFVRRGNPA (191 aa)). 3 disordered regions span residues 956-1102 (VRRG…NPSE), 1145-1174 (GAKA…AQTV), and 1197-1217 (NKMR…DDDW). Over residues 965–974 (KSKKKPRKKS) the composition is skewed to basic residues. Over residues 976 to 987 (GMSAPTTQSSKT) the composition is skewed to polar residues. The segment covering 994-1007 (SSNNQNTTVSQSLN) has biased composition (low complexity). Positions 1025 to 1038 (PAPPPPGSKKPAPQ) are enriched in pro residues. The span at 1050–1071 (PQAQMQTQTQIPASQSSATQSS) shows a compositional bias: low complexity. Pro residues predominate over residues 1072-1081 (IPPPPPPPPS). The SH3 domain occupies 1083–1145 (TSEPQFEAAY…PTAYMVKHEG (63 aa)). Polar residues predominate over residues 1162–1174 (IQNQSQPASAQTV). The span at 1203 to 1217 (SDEEAAASSDNDDDW) shows a compositional bias: acidic residues.

This sequence belongs to the TRAFAC class myosin-kinesin ATPase superfamily. Myosin family. Phosphorylation of the TEDS site (Ser-358) is required for the polarization of the actin cytoskeleton. Phosphorylation probably activates the myosin-I ATPase activity.

The protein localises to the cytoplasm. Its subcellular location is the cytoskeleton. It localises to the actin patch. Type-I myosin implicated in the organization of the actin cytoskeleton. Required for proper actin cytoskeleton polarization. At the cell cortex, assembles in patch-like structures together with proteins from the actin-polymerizing machinery and promotes actin assembly. Functions as actin nucleation-promoting factor (NPF) for the Arp2/3 complex. This is Myosin-5 (MYO5) from Candida glabrata (strain ATCC 2001 / BCRC 20586 / JCM 3761 / NBRC 0622 / NRRL Y-65 / CBS 138) (Yeast).